We begin with the raw amino-acid sequence, 124 residues long: Holo-[acyl-carrier-protein] synthase (124 aa).

Mg(2+) contacts are provided by Asp-8 and Glu-57.

The protein belongs to the P-Pant transferase superfamily. AcpS family. The cofactor is Mg(2+).

The protein localises to the cytoplasm. It carries out the reaction apo-[ACP] + CoA = holo-[ACP] + adenosine 3',5'-bisphosphate + H(+). In terms of biological role, transfers the 4'-phosphopantetheine moiety from coenzyme A to a Ser of acyl-carrier-protein. The polypeptide is Holo-[acyl-carrier-protein] synthase (Leptospira borgpetersenii serovar Hardjo-bovis (strain JB197)).